Consider the following 329-residue polypeptide: Serpentine receptor class alpha-2 (329 aa).

7 consecutive transmembrane segments (helical) span residues 25 to 45 (FVYLLAIILTFITTYFAVKIL), 57 to 77 (ILLVQNLFYANLYQFFHGIEA), 104 to 124 (YYKIILMGSSGMVYGQTGLLI), 144 to 164 (CAVISILVLICSSSTGRLIVW), 188 to 208 (HYFTMCAVLSTINFCISTFIL), 240 to 260 (FLTVSQFVAVFLNSFGMIVLV), and 273 to 293 (LLVVWLYAFPIVVLMFPVILV).

This sequence belongs to the nematode receptor-like protein sra family.

It is found in the membrane. The polypeptide is Serpentine receptor class alpha-2 (sra-2) (Caenorhabditis elegans).